The primary structure comprises 217 residues: 3,4-dihydroxy-2-butanone 4-phosphate synthase (217 aa).

D-ribulose 5-phosphate contacts are provided by residues Arg-37–Glu-38, Asp-42, Arg-150–Thr-154, and Glu-174. Glu-38 contributes to the Mg(2+) binding site. Residue His-153 participates in Mg(2+) binding.

This sequence belongs to the DHBP synthase family. In terms of assembly, homodimer. Mg(2+) is required as a cofactor. Requires Mn(2+) as cofactor.

The enzyme catalyses D-ribulose 5-phosphate = (2S)-2-hydroxy-3-oxobutyl phosphate + formate + H(+). It functions in the pathway cofactor biosynthesis; riboflavin biosynthesis; 2-hydroxy-3-oxobutyl phosphate from D-ribulose 5-phosphate: step 1/1. Its function is as follows. Catalyzes the conversion of D-ribulose 5-phosphate to formate and 3,4-dihydroxy-2-butanone 4-phosphate. This Escherichia coli O17:K52:H18 (strain UMN026 / ExPEC) protein is 3,4-dihydroxy-2-butanone 4-phosphate synthase.